We begin with the raw amino-acid sequence, 326 residues long: Probable cell division protein WhiA (326 aa).

Residues 275–308 (SLDELGHHADPPMTKDAVAGRIRRLLAMADKKAV) constitute a DNA-binding region (H-T-H motif).

It belongs to the WhiA family.

In terms of biological role, involved in cell division and chromosome segregation. The protein is Probable cell division protein WhiA of Clavibacter sepedonicus (Clavibacter michiganensis subsp. sepedonicus).